A 171-amino-acid polypeptide reads, in one-letter code: Ly6/PLAUR domain-containing protein 6 (171 aa).

Residues 1–25 form the signal peptide; that stretch reads MEPSPALAWLLLLSLVADCLKAAQS. Positions 47–141 constitute a UPAR/Ly6 domain; it reads FKCFTCEKAA…PRNETDATFA (95 aa). 6 disulfide bridges follow: Cys49–Cys77, Cys52–Cys61, Cys70–Cys96, Cys102–Cys121, Cys107–Cys118, and Cys122–Cys127. The NxI motif signature appears at 88–90; sequence NSI. Asn134 and Asn147 each carry an N-linked (GlcNAc...) asparagine glycan. The GPI-anchor amidated asparagine moiety is linked to residue Asn147. Residues 148–171 constitute a propeptide, removed in mature form; the sequence is QTNGHPHCVSVIVSCLWVWLGLTL.

Interacts with nicotinic acetylcholine receptors (nAChRs) including CHRNA3, CHRNA4, CHRNA5, CHRNA6, CHRNA7, CHRNB2 and CHRNB4. Interacts (via NxI motif) with LRP6. Detected in the frontal cortex and hippocampus (at protein level). Highly expressed in the brain and spinal cord, as well as dorsal root and trigeminal ganglia.

The protein localises to the secreted. It localises to the cytoplasm. Its subcellular location is the cell membrane. The protein resides in the synapse. It is found in the synaptosome. The protein localises to the membrane raft. It localises to the cell projection. Its subcellular location is the dendrite. The protein resides in the perikaryon. Acts as a modulator of nicotinic acetylcholine receptors (nAChRs) function in the brain. Inhibits nicotine-induced Ca(2+) influx through nAChRs. In vitro, specifically inhibits alpha-3:beta-4 and alpha-7 nAChR currents in an allosteric manner. Acts as a positive regulator of Wnt/beta-catenin signaling. This is Ly6/PLAUR domain-containing protein 6 (Lypd6) from Mus musculus (Mouse).